The chain runs to 31 residues: MSDINGTRLPWLATCPCVGEDVNPTLSRGER.

Residues 1 to 10 (MSDINGTRLP) constitute a propeptide that is removed on maturation. The cyclopeptide (Trp-Pro) cross-link spans 11-16 (WLATCP). A propeptide spanning residues 17–31 (CVGEDVNPTLSRGER) is cleaved from the precursor.

Belongs to the MSDIN fungal toxin family. Post-translationally, processed by the macrocyclase-peptidase enzyme POPB to yield a toxic cyclic hexapeptide. POPB first removes 10 residues from the N-terminus. Conformational trapping of the remaining peptide forces the enzyme to release this intermediate rather than proceed to macrocyclization. The enzyme rebinds the remaining peptide in a different conformation and catalyzes macrocyclization of the N-terminal 6 residues.

In terms of biological role, probable toxin that belongs to the MSDIN-like toxin family responsible for a large number of food poisoning cases and deaths. The chain is MSDIN-like toxin proprotein 4 from Amanita phalloides (Death cap).